A 234-amino-acid chain; its full sequence is Phosphatidylcholine synthase (234 aa).

The Cytoplasmic portion of the chain corresponds to 1–3 (MKN). A helical transmembrane segment spans residues 4–24 (INLILAWLVHIFTASGLIVGL). Residues 25 to 26 (YS) lie on the Periplasmic side of the membrane. The chain crosses the membrane as a helical span at residues 27-47 (IISIVNGNYSLLLKLTVIGLI). Residues 48–75 (IDGIDGTMARKLKVKELIPEIDGTLLDN) are Cytoplasmic-facing. Residues 76–96 (ITDYINYTFIPVIFFYLGEFI) traverse the membrane as a helical segment. Over 97–98 (EE) the chain is Periplasmic. Residues 99–116 (KYKVAICIGILLSSAYQF) traverse the membrane as a helical segment. At 117–126 (SRTDAKTNDN) the chain is on the cytoplasmic side. The chain crosses the membrane as a helical span at residues 127-147 (YFRGFPSLWNLFVILNIIFKM). Residues 148–149 (EQ) are Periplasmic-facing. The helical transmembrane segment at 150–170 (ITNLITMSICIITSFIPIKFI) threads the bilayer. Residues 171–180 (YPSKTKELRK) lie on the Cytoplasmic side of the membrane. Residues 181-201 (ITIPITIISCLIFVVSIFSEL) form a helical membrane-spanning segment. Topologically, residues 202–207 (STTALK) are periplasmic. A helical transmembrane segment spans residues 208-228 (MAKTVLILYFAYLTLASIYLT). Residues 229-234 (YKTRNR) are Cytoplasmic-facing.

The protein belongs to the CDP-alcohol phosphatidyltransferase class-I family. The cofactor is Mn(2+).

It is found in the cell inner membrane. It catalyses the reaction a CDP-1,2-diacyl-sn-glycerol + choline = a 1,2-diacyl-sn-glycero-3-phosphocholine + CMP + H(+). Functionally, condenses choline with CDP-diglyceride to produce phosphatidylcholine and CMP. The protein is Phosphatidylcholine synthase of Borreliella burgdorferi (strain ATCC 35210 / DSM 4680 / CIP 102532 / B31) (Borrelia burgdorferi).